The chain runs to 234 residues: Cyclo(L-leucyl-L-leucyl) synthase (234 aa).

The active-site Nucleophile is the Ser33. Substrate-binding positions include Asn36, 179–183 (YIFAE), Tyr203, and 208–209 (SI).

It belongs to the CDPS family.

It catalyses the reaction 2 L-leucyl-tRNA(Leu) = cyclo(L-leucyl-L-leucyl) + 2 tRNA(Leu) + 2 H(+). Functionally, it uses activated amino acids in the form of aminoacyl-tRNAs (aa-tRNAs) as substrates to catalyze the ATP-independent formation of cyclodipeptides which are intermediates in diketopiperazine (DKP) biosynthetic pathways. Catalyzes the formation of cyclo(L-Leu-L-Leu) (cLL) from L-leucyl-tRNA(Leu). Can incorporate various nonpolar residues, such as L-phenylalanine, L-leucine and L-methionine, into cyclodipeptides. The polypeptide is Cyclo(L-leucyl-L-leucyl) synthase (Photorhabdus laumondii subsp. laumondii (strain DSM 15139 / CIP 105565 / TT01) (Photorhabdus luminescens subsp. laumondii)).